Reading from the N-terminus, the 123-residue chain is MPPKAASKGAKKAASKAKAARSTDKKKRRRRRESYSIYIYKVLKQVHPDTGISSKAMSIMNSFVNDIFERIAAEASRLAHYNRRSTITSREIQTAVRLLLPGELAKHAVSEGTKAVTKYTQSK.

A disordered region spans residues 1-32; the sequence is MPPKAASKGAKKAASKAKAARSTDKKKRRRRR. Residues 9–32 are compositionally biased toward basic residues; that stretch reads GAKKAASKAKAARSTDKKKRRRRR. O-linked (GlcNAc) serine glycosylation occurs at Ser110. A Glycyl lysine isopeptide (Lys-Gly) (interchain with G-Cter in ubiquitin) cross-link involves residue Lys118.

This sequence belongs to the histone H2B family. As to quaternary structure, the nucleosome is a histone octamer containing two molecules each of H2A, H2B, H3 and H4 assembled in one H3-H4 heterotetramer and two H2A-H2B heterodimers. The octamer wraps approximately 147 bp of DNA. In terms of processing, monoubiquitination of Lys-118 gives a specific tag for epigenetic transcriptional activation and is also prerequisite for histone H3 'Lys-4' and 'Lys-79' methylation.

Its subcellular location is the nucleus. The protein localises to the chromosome. Core component of nucleosome. Nucleosomes wrap and compact DNA into chromatin, limiting DNA accessibility to the cellular machineries which require DNA as a template. Histones thereby play a central role in transcription regulation, DNA repair, DNA replication and chromosomal stability. DNA accessibility is regulated via a complex set of post-translational modifications of histones, also called histone code, and nucleosome remodeling. The polypeptide is Histone H2B (Urechis caupo (Innkeeper worm)).